Consider the following 152-residue polypeptide: Synaptobrevin (152 aa).

Polar residues predominate over residues 1–16 (MENNEAPSPSGSNNND). The interval 1-30 (MENNEAPSPSGSNNNDFPILPPPPNANDNY) is disordered. Over 1 to 110 (MENNEAPSPS…KRKQWWANMK (110 aa)) the chain is Cytoplasmic. The 61-residue stretch at 47-107 (KLQQTQAKVD…GKLKRKQWWA (61 aa)) folds into the v-SNARE coiled-coil homology domain. The chain crosses the membrane as a helical; Anchor for type IV membrane protein span at residues 111 to 130 (MMIILGVIAVVLLIIVLVSV). At 131-152 (WPSSSDSGSGGGNKAITQAPPH) the chain is on the vesicular side. Positions 133-152 (SSSDSGSGGGNKAITQAPPH) are disordered.

It belongs to the synaptobrevin family. As to quaternary structure, part of the SNARE core complex containing Snap25 and syntaxin. In terms of processing, ubiquitinated by gzl, regulating endocytic trafficking. In wing imaginal disks, ubiquitination by gzl promotes transcytosis of wingless (wg) to the basolateral surface. As to expression, not nervous system-specific; abundant in cells of the gut and Malpighian tubules.

It is found in the cytoplasmic vesicle. The protein resides in the secretory vesicle. It localises to the synaptic vesicle membrane. The protein localises to the cell membrane. Functionally, involved in the targeting and/or fusion of transport vesicles to their target membrane. The chain is Synaptobrevin from Drosophila melanogaster (Fruit fly).